Here is a 403-residue protein sequence, read N- to C-terminus: Prostaglandin D2 receptor 2 (403 aa).

Over 1 to 34 (MANITLKPLCPLLEEMVQLPNHSNSSLRYIDHVS) the chain is Extracellular. N-linked (GlcNAc...) asparagine glycosylation is found at Asn-3, Asn-21, and Asn-24. The helical transmembrane segment at 35 to 55 (VLLHGLASLLGLVENGLILFV) threads the bilayer. At 56 to 71 (VGCRMRQTVVTTWVLH) the chain is on the cytoplasmic side. Residues 72 to 92 (LALSDLLAAASLPFFTYFLAV) traverse the membrane as a helical segment. The Extracellular segment spans residues 93-104 (GHSWELGTTFCK). Cys-103 and Cys-198 are joined by a disulfide. Residues 105–125 (LHSSVFFLNMFASGFLLSAIS) form a helical membrane-spanning segment. Residues 126-147 (LDRCLQVVRPVWAQNHRTVAAA) lie on the Cytoplasmic side of the membrane. A helical transmembrane segment spans residues 148-168 (HRVCLMLWALAVLNTVPYFVF). Residues 169-209 (RDTIPRRDGRIMCYYNMLLLNPGSDRDTTCDYRQKALAVSK) are Extracellular-facing. The helical transmembrane segment at 210–230 (FLLAFMVPLAIIASSHVAVSL) threads the bilayer. Over 231–245 (QLHHRGRQRTGRFVR) the chain is Cytoplasmic. The helical transmembrane segment at 246-266 (LVAAIVVAFILCWGPYHIFSL) threads the bilayer. Topologically, residues 267–284 (LEARAHSVTTLRQLASRG) are extracellular. Residues 285-305 (LPFVTSLAFFNSVVNPLLYVL) traverse the membrane as a helical segment. The Cytoplasmic portion of the chain corresponds to 306 to 403 (TCPDMLHKLR…KQGSLSCTLD (98 aa)). Positions 329–332 (DSDL) match the Involved in the recycling of CRTH2 motif. Phosphoserine is present on Ser-330. Disordered regions lie at residues 332–353 (LSTGPGKRCRRRHRRRASSTTT) and 384–403 (PRRVREQSQEKQGSLSCTLD). Residues 338 to 348 (KRCRRRHRRRA) are compositionally biased toward basic residues. Ser-349 carries the phosphoserine modification. Polar residues predominate over residues 393–403 (EKQGSLSCTLD).

The protein belongs to the G-protein coupled receptor 1 family. In terms of processing, phosphorylated.

It is found in the cell membrane. Functionally, receptor for prostaglandin D2 (PGD2). Coupled to the G(i)-protein. Receptor activation may result in pertussis toxin-sensitive decreases in cAMP levels and Ca(2+) mobilization. PI3K signaling is also implicated in mediating PTGDR2 effects. PGD2 induced receptor internalization. CRTH2 internalization can be regulated by diverse kinases such as, PKC, PKA, GRK2, GPRK5/GRK5 and GRK6. Receptor activation is responsible, at least in part, in immune regulation and allergic/inflammation responses. The polypeptide is Prostaglandin D2 receptor 2 (Ptgdr2) (Rattus norvegicus (Rat)).